The chain runs to 1006 residues: MSEDSEEEDYSDRSISDDDDLDEDSFMKFVSDDIHPCTLLAADSIGDPFFPRTTQILLEYQLGRWVPRLRGPRDLYGVSSSGPLSPTRWPYHCEVIDEKVQHIEWTPFVPEPVYVPTGLEIEPVYPNSKEDTVVYLAEDDHLCKAYKEPCFVYSRVGGNRTSLKQPVDNCDNTLVFEARFESGNLQKVVKVADHEYELTVRPDLFTNKHTQWYYFQVTNTQAEIVYRFTIVNFTKPASLYNRGMKPLFYSEKEAKTHNIGWQRIGDQIKYYKNNLGQDGRHFFSLTWTFQFPHSQDTCYFAHCYPYTYSNLQEYLSGINSDPVRSKFCKIRVLCHTLARNMVYVLTITTPLKTSDSKRKAVILTARVHPGETNSSWIMKGFLDYILGDSSDARLLRDTFIFKVVPMLNPDGVIVGNYRCSLAGRDLNRNYTSLLKESFPSVWYTRNMINRLMEKREVILYCDLHGHSRKQNIFMYGCDGSSRSKTKGLYLQQRIFPLMLSKNCPNIFSFSACKFNVQKSKEGTGRVVMWKMGIRNSFTLEATFCGSTLGNKRGTHFGTKDLESMGYHFCDSLLDYCDPDRSKYYQCLKELEEMEKHLSSERVSDNTDTSLVEISLDVESSSRGSDSSESNDTQTYLLKVTSQARNKKKYLKTKRERNAILANCQNNMQEVYGKEHLLQRHDESNSDGNDPRIDAPDVYVAHCFRRPLPNQGVVKIPGQRFYPGKTWSSSQRMIKSLNKDHRTCILETCKNPIQEVQSRGINIHESCFKMAKCPMNKRPSHWIEKTRIPTESHHQLKSKAKRCSSFQSKRTGTNWTDDEKRIYRDKRIAQTQEILKYLLPIVESSQNRKSTQMNNLINPIANLQQHQLIPTACINRRRYSIPWTPTRNLPFKAQRNLMTDTSEWLQSVPLGSFESLLPLCNLQKKTKHFELWGKKAKDVQLATSQWEAVPLSSNMDASIIRGNSVLQPKEFTMRSSKQRIPYLTKTSKKPSESDGLLTFQLKIHRNS.

Positions 304-576 (YPYTYSNLQE…HFCDSLLDYC (273 aa)) constitute a Peptidase M14 domain. Zn(2+) is bound by residues H368, E371, and H464. E540 serves as the catalytic Proton donor/acceptor. A disordered region spans residues 790–810 (ESHHQLKSKAKRCSSFQSKRT).

It belongs to the peptidase M14 family. Requires Zn(2+) as cofactor. In terms of tissue distribution, widely expressed. Expressed abundantly in tissues with m otile cilia such as testis, lung and trachea. Abundantly expressed in pituitary and kidney, moderately expressed in brain, eye, fat, pancreas, stomach, and adrenal.

The protein localises to the cytoplasm. It localises to the cytosol. It carries out the reaction (L-glutamyl)(n+1)-gamma-L-glutamyl-L-glutamyl-[protein] + H2O = (L-glutamyl)(n)-gamma-L-glutamyl-L-glutamyl-[protein] + L-glutamate. Its function is as follows. Metallocarboxypeptidase that mediates deglutamylation of tubulin and non-tubulin target proteins. Catalyzes the removal of polyglutamate side chains present on the gamma-carboxyl group of glutamate residues within the C-terminal tail of tubulin protein. Specifically cleaves tubulin long-side-chains, while it is not able to remove the branching point glutamate. Also catalyzes the removal of polyglutamate residues from the carboxy-terminus of non-tubulin proteins such as MYLK. May catalyze the hydrolysis of aspartate from the carboxy-terminus of target proteins. Does not show detyrosinase or deglycylase activities from the carboxy-terminus of target proteins. This is Cytosolic carboxypeptidase 3 from Mus musculus (Mouse).